A 497-amino-acid polypeptide reads, in one-letter code: WASH complex subunit homolog 1 (497 aa).

Positions 306–497 are disordered; it reads EASEPTEAEA…PPNFDDEEWD (192 aa). Pro residues predominate over residues 323–339; that stretch reads LPPPPPPMKLDPSPQPA. The span at 341 to 350 shows a compositional bias: low complexity; sequence TPVEITEIPP. Positions 351–372 are enriched in pro residues; sequence IISPPAPPPPPPPPPPPPPPQT. The 23-residue stretch at 390-412 folds into the WH2 domain; it reads GRSDLMAAIRAAGGAGNAKLSRI.

It belongs to the WASH1 family. In terms of assembly, component of the WASH core complex. Component of the DHIC (ddl-1-containing hsf-1 inhibitory) complex, which contains at least ddl-1, ddl-2, hsb-1 and hsf-1. Within the complex, interacts with ddl-1. Formation of the DHIC may be dependent upon the Insulin/IGF-1-like signaling (IIS) mediated pathway. As to expression, expressed in several neurons located throughout the body.

Functionally, acts as a component of the WASH core complex that functions as a nucleation-promoting factor (NPF) at the surface of endosomes, where it recruits and activates the Arp2/3 complex to induce actin polymerization, playing a key role in the fission of tubules that serve as transport intermediates during endosome sorting. Acts as a component of the DHIC (ddl-1-containing hsf-1 inhibitory complex) which modulates lifespan by sequestering the heat shock transcription factor hsf-1 to negatively regulate its binding to DNA and its transcriptional activity. This chain is WASH complex subunit homolog 1, found in Caenorhabditis elegans.